A 365-amino-acid polypeptide reads, in one-letter code: Beta-parvin (365 aa).

Pro residues predominate over residues 1-12; it reads MSSAPPRSPTPR. The interval 1-52 is disordered; the sequence is MSSAPPRSPTPRAPKMKKDESFLGKLGGTLARKKKTREVTDLQEEGKSAINS. Ser-8 is modified (phosphoserine). A compositionally biased stretch (basic and acidic residues) spans 37–47; sequence REVTDLQEEGK. 2 Calponin-homology (CH) domains span residues 88-195 and 255-362; these read KELV…MHFR and NLVK…TKYK.

Belongs to the parvin family. As to quaternary structure, interacts with ILK, ARHGEF6, PXN (via LD motifs), ACTN2 and actin. Interacts with DYSF. Post-translationally, phosphorylated by ILK. Expressed predominantly in heart and moderately in spleen, lung and skeletal muscle.

The protein localises to the cell junction. The protein resides in the focal adhesion. It localises to the cell membrane. It is found in the cytoplasm. Its subcellular location is the cytoskeleton. The protein localises to the cell projection. The protein resides in the lamellipodium. It localises to the myofibril. It is found in the sarcomere. Its subcellular location is the z line. Its function is as follows. Adapter protein that plays a role in integrin signaling via ILK and in activation of the GTPases CDC42 and RAC1 by guanine exchange factors, such as ARHGEF6. Is involved in the reorganization of the actin cytoskeleton and formation of lamellipodia. Plays a role in cell adhesion, cell spreading, establishment or maintenance of cell polarity, and cell migration. The polypeptide is Beta-parvin (Parvb) (Mus musculus (Mouse)).